The chain runs to 544 residues: 4-coumarate--CoA ligase 2 (544 aa).

The ATP site is built by S190, S191, G192, T193, T194, and K198. A (E)-4-coumaroyl-AMP-binding site is contributed by Y240. A CoA-binding site is contributed by K261. Positions 263-332 are SBD1; that stretch reads DIVPFLELIQ…AKFPNAKLGQ (70 aa). Residues A310, Q332, G333, T337, and M345 each contribute to the (E)-4-coumaroyl-AMP site. Residues Q332, G333, and T337 each contribute to the ATP site. An SBD2 region spans residues 333-400; the sequence is GYGMTEAGPV…IRGDQIMKGY (68 aa). ATP-binding residues include D421 and R436. (E)-4-coumaroyl-AMP is bound by residues K438 and K442. K444 and G445 together coordinate CoA. K527 is a binding site for ATP.

The protein belongs to the ATP-dependent AMP-binding enzyme family. Requires Mg(2+) as cofactor.

The enzyme catalyses (E)-4-coumarate + ATP + CoA = (E)-4-coumaroyl-CoA + AMP + diphosphate. It carries out the reaction (E)-4-coumarate + ATP + H(+) = (E)-4-coumaroyl-AMP + diphosphate. The catalysed reaction is (E)-4-coumaroyl-AMP + CoA = (E)-4-coumaroyl-CoA + AMP + H(+). The protein operates within phytoalexin biosynthesis; 3,4',5-trihydroxystilbene biosynthesis; 3,4',5-trihydroxystilbene from trans-4-coumarate: step 1/2. Carboxylate--CoA ligase that may use 4-coumarate as substrate. Follows a two-step reaction mechanism, wherein the carboxylate substrate first undergoes adenylation by ATP, followed by a thioesterification in the presence of CoA to yield the final CoA thioester. The polypeptide is 4-coumarate--CoA ligase 2 (4CL2) (Petroselinum crispum (Parsley)).